Here is a 1193-residue protein sequence, read N- to C-terminus: Kinesin-related protein 3 (1193 aa).

The region spanning 3 to 329 (SIRVVCRFRP…LRFGSRAKNI (327 aa)) is the Kinesin motor domain. Position 85 to 92 (85 to 92 (GQTGSGKT)) interacts with ATP. 7 disordered regions span residues 377–429 (KSSG…SSNV), 573–600 (SSIA…KHAD), 611–630 (LLQR…TATS), 638–665 (ISES…ATSS), 973–1016 (GGGG…SANL), 1032–1114 (KAEP…PVKI), and 1127–1193 (FKKK…QQKD). The span at 405 to 429 (SSNLSNSVNSTSNLNTSSNTSSSNV) shows a compositional bias: low complexity. A coiled-coil region spans residues 450–962 (ELIKVLQEKC…SQVGVDAQNT (513 aa)). Polar residues-rich tracts occupy residues 573–585 (SSIA…TPKS) and 614–630 (RTPS…TATS). 2 stretches are compositionally biased toward low complexity: residues 643-665 (NIGS…ATSS) and 985-1006 (HSSS…NNNH). The segment covering 1007-1016 (TTPTPLSANL) has biased composition (polar residues). Composition is skewed to low complexity over residues 1044-1078 (NTSI…IGNS), 1086-1109 (NNNS…LNGN), and 1132-1149 (PSST…QSPQ). Polar residues-rich tracts occupy residues 1150 to 1165 (TPSH…ISPN) and 1174 to 1193 (FSYT…QQKD).

Belongs to the TRAFAC class myosin-kinesin ATPase superfamily. Kinesin family. Kinesin subfamily. Dimer.

The protein localises to the cytoplasm. It localises to the cytoskeleton. In terms of biological role, microtubule-associated force-producing protein that plays a role in organelle transport. Its motor activity is directed toward the microtubule's plus end. The maximal velocity in an inverted motility assay (moving microtubules on fixed motors) was 1.96 um/s. The sequence is that of Kinesin-related protein 3 (kif3) from Dictyostelium discoideum (Social amoeba).